The chain runs to 416 residues: Advanced glycosylation end product-specific receptor (416 aa).

The signal sequence occupies residues 1 to 22; sequence MAAGAVVGAWMLVLSLGGTVTG. The Ig-like V-type domain occupies 23 to 115; sequence DQNITARIGK…KETKSNYRVR (93 aa). At 23-352 the chain is on the extracellular side; that stretch reads DQNITARIGK…VEGPGLETLA (330 aa). 2 N-linked (GlcNAc...) asparagine glycosylation sites follow: Asn-25 and Asn-80. Intrachain disulfides connect Cys-38–Cys-98 and Cys-143–Cys-207. Ig-like C2-type domains lie at 123 to 220 and 238 to 327; these read PEIV…RALH and PNVD…RAVS. A helical membrane pass occupies residues 353–373; it reads LTLGILGGLGTVALLIGVIVW. Topologically, residues 374–416 are cytoplasmic; the sequence is HRRRQRKGQERKVPENQEEEEEERAELNQPEEPEAAESSTGGP. A disordered region spans residues 377–416; sequence RQRKGQERKVPENQEEEEEERAELNQPEEPEAAESSTGGP. Over residues 389-408 the composition is skewed to acidic residues; it reads NQEEEEEERAELNQPEEPEA.

In terms of assembly, constitutive homodimer; disulfide-linked. Forms homooligomers. Interacts with S100A1 and APP. Interacts with S100B, S100A12 and S100A14. Interacts with TIRAP. Interacts with HMGB1. Interacts with LGP2; this interaction plays an important role in AGER-mediated pro-inflammatory responses and cytokine release. Interacts with double-strand break repair protein MRE11 which is a core component of the MRN complex; the interaction enhances MRE11 endonuclease activity and promotes DNA repair. Interacts with the MCM2-7 complex via interaction with complex member MCM2; the interaction is increased following DNA replication stress and stabilizes the MCM2-7 complex at replication forks. In terms of processing, phosphorylated on its cytoplasmic domain by PKCzeta/PRKCZ upon ligand binding. Phosphorylated by ATM following DNA damage. Post-translationally, targeted by the ubiquitin E3 ligase subunit FBXO10 to mediate its ubiquitination and degradation. Endothelial cells.

The protein resides in the cell membrane. It is found in the cell projection. The protein localises to the phagocytic cup. It localises to the early endosome. Its subcellular location is the nucleus. Its function is as follows. Cell surface pattern recognition receptor that senses endogenous stress signals with a broad ligand repertoire including advanced glycation end products, S100 proteins, high-mobility group box 1 protein/HMGB1, amyloid beta/APP oligomers, nucleic acids, histones, phospholipids and glycosaminoglycans. Advanced glycosylation end products are nonenzymatically glycosylated proteins which accumulate in vascular tissue in aging and at an accelerated rate in diabetes. These ligands accumulate at inflammatory sites during the pathogenesis of various diseases including diabetes, vascular complications, neurodegenerative disorders and cancers, and RAGE transduces their binding into pro-inflammatory responses. Upon ligand binding, uses TIRAP and MYD88 as adapters to transduce the signal ultimately leading to the induction of inflammatory cytokines IL6, IL8 and TNFalpha through activation of NF-kappa-B. Interaction with S100A12 on endothelium, mononuclear phagocytes, and lymphocytes triggers cellular activation, with generation of key pro-inflammatory mediators. Interaction with S100B after myocardial infarction may play a role in myocyte apoptosis by activating ERK1/2 and p53/TP53 signaling. Contributes to the translocation of amyloid-beta peptide (ABPP) across the cell membrane from the extracellular to the intracellular space in cortical neurons. ABPP-initiated RAGE signaling, especially stimulation of p38 mitogen-activated protein kinase (MAPK), has the capacity to drive a transport system delivering ABPP as a complex with RAGE to the intraneuronal space. Participates in endothelial albumin transcytosis together with HMGB1 through the RAGE/SRC/Caveolin-1 pathway, leading to endothelial hyperpermeability. Mediates the loading of HMGB1 in extracellular vesicles (EVs) that shuttle HMGB1 to hepatocytes by transferrin-mediated endocytosis and subsequently promote hepatocyte pyroptosis by activating the NLRP3 inflammasome. Binds to DNA and promotes extracellular hypomethylated DNA (CpG DNA) uptake by cells via the endosomal route to activate inflammatory responses. Mediates phagocytosis by non-professional phagocytes (NPP) and this is enhanced by binding to ligands including RNA, DNA, HMGB1 and histones. Promotes NPP-mediated phagocytosis of Saccharomyces cerevisiae spores by binding to RNA attached to the spore wall. Also promotes NPP-mediated phagocytosis of apoptotic cells. Following DNA damage, recruited to DNA double-strand break sites where it colocalizes with the MRN repair complex via interaction with double-strand break repair protein MRE11. Enhances the endonuclease activity of MRE11, promoting the end resection of damaged DNA. Promotes DNA damage repair in trophoblasts which enhances trophoblast invasion and contributes to placental development and maintenance. Protects cells from DNA replication stress by localizing to damaged replication forks where it stabilizes the MCM2-7 complex and promotes faithful progression of the replication fork. The sequence is that of Advanced glycosylation end product-specific receptor (AGER) from Bos taurus (Bovine).